We begin with the raw amino-acid sequence, 368 residues long: MFEENNSPTTDNSLWTLQGRQRASPAQRLHNLTSAGSSTSSSGLPLPQNIFTNPAIQPSSVINLNHSTDVVIGPMTQYQGPVSIYYMDYMEAHAMQTAAGINSNNANGNGNANRSRDKSPSRRVTRNTILLITLILLVLATGLIVLYVELNRPKPELPSNKAIYFGNNYDHQTFPNLGNGHLVVDREQWGASKNSHGLTIPLKRPIPYVLITHIGVQSLPCDNIYKCSIKMRTIQDSAIAEKGLPDIQSNFYVSEEGNIYVGRGWDWANTYANQTLAITFMGDYGRFKPGPKQLEGVQFLLAHAVANRNIDVDYKLVAQNQTKVTRSPGAYVYQEIRNWPHFYGCGMDEAPACGIELGMKTESWDAKQ.

The Cytoplasmic segment spans residues 1 to 127; the sequence is MFEENNSPTT…KSPSRRVTRN (127 aa). 2 disordered regions span residues 21-46 and 101-122; these read QRAS…GLPL and INSN…SPSR. 2 stretches are compositionally biased toward low complexity: residues 33–43 and 102–113; these read TSAGSSTSSSG and NSNNANGNGNAN. A helical transmembrane segment spans residues 128 to 148; sequence TILLITLILLVLATGLIVLYV. Topologically, residues 149-368 are extracellular; that stretch reads ELNRPKPELP…MKTESWDAKQ (220 aa). Residues Cys221 and Cys227 are joined by a disulfide bond. The region spanning 233–320 is the N-acetylmuramoyl-L-alanine amidase domain; that stretch reads TIQDSAIAEK…DVDYKLVAQN (88 aa). Residues Asn273 and Asn320 are each glycosylated (N-linked (GlcNAc...) asparagine).

This sequence belongs to the N-acetylmuramoyl-L-alanine amidase 2 family. In terms of tissue distribution, expressed in uninduced hemocytes and mbn-2 cells.

Its subcellular location is the cell membrane. In terms of biological role, peptidoglycan-recognition protein probably involved in innate immunity by binding to peptidoglycans (PGN) of bacteria and activating the immune response. The polypeptide is Peptidoglycan-recognition protein LA (PGRP-LA) (Drosophila melanogaster (Fruit fly)).